The primary structure comprises 312 residues: DNA primase small subunit PriS (312 aa).

Catalysis depends on residues D88, D90, and D215.

The protein belongs to the eukaryotic-type primase small subunit family. Heterodimer of a small subunit (PriS) and a large subunit (PriL). Requires Mg(2+) as cofactor. Mn(2+) is required as a cofactor.

Its function is as follows. Catalytic subunit of DNA primase, an RNA polymerase that catalyzes the synthesis of short RNA molecules used as primers for DNA polymerase during DNA replication. The small subunit contains the primase catalytic core and has DNA synthesis activity on its own. Binding to the large subunit stabilizes and modulates the activity, increasing the rate of DNA synthesis while decreasing the length of the DNA fragments, and conferring RNA synthesis capability. The DNA polymerase activity may enable DNA primase to also catalyze primer extension after primer synthesis. May also play a role in DNA repair. This is DNA primase small subunit PriS from Pyrobaculum calidifontis (strain DSM 21063 / JCM 11548 / VA1).